We begin with the raw amino-acid sequence, 250 residues long: Agamous-like MADS-box protein AGL8 homolog (250 aa).

Positions 3-57 constitute an MADS-box domain; that stretch reads RGRVQLKRIENKINRQVTFSKRRSGLLKKAHEISVLCDAEVGLIVFSTKGKLFEY. A K-box domain is found at 88-178; it reads PGSWTLENAK…SKKVKEREKE (91 aa). 2 disordered regions span residues 162 to 191 and 206 to 241; these read QEQN…QNHE and PHLG…TVMP. Positions 171–180 are enriched in basic and acidic residues; it reads KVKEREKEVE. Composition is skewed to polar residues over residues 181-191 and 226-240; these read QQNQWDQQNHE and GNSS…NTVM.

The protein localises to the nucleus. Probable transcription factor. The protein is Agamous-like MADS-box protein AGL8 homolog (SCM1) of Solanum commersonii (Commerson's wild potato).